The following is a 304-amino-acid chain: Non-specific ribonucleoside hydrolase RihC (304 aa).

Residue His-233 is part of the active site.

This sequence belongs to the IUNH family. RihC subfamily.

Hydrolyzes both purine and pyrimidine ribonucleosides with a broad-substrate specificity. The sequence is that of Non-specific ribonucleoside hydrolase RihC from Escherichia coli O7:K1 (strain IAI39 / ExPEC).